Consider the following 404-residue polypeptide: Diphosphomevalonate decarboxylase mvd1 (404 aa).

Residues 25–28, R82, 161–166, and T217 each bind (R)-5-diphosphomevalonate; these read YWGK and SGSACR.

The protein belongs to the diphosphomevalonate decarboxylase family. Homodimer.

The enzyme catalyses (R)-5-diphosphomevalonate + ATP = isopentenyl diphosphate + ADP + phosphate + CO2. It participates in isoprenoid biosynthesis; isopentenyl diphosphate biosynthesis via mevalonate pathway; isopentenyl diphosphate from (R)-mevalonate: step 3/3. In terms of biological role, diphosphomevalonate decarboxylase; part of the second module of ergosterol biosynthesis pathway that includes the middle steps of the pathway. Mvd1 converts diphosphomevalonate into isopentenyl diphosphate. The second module is carried out in the vacuole and involves the formation of farnesyl diphosphate, which is also an important intermediate in the biosynthesis of ubiquinone, dolichol, heme and prenylated proteins. Activity by the mevalonate kinase erg12 (AFUA_4G07780) first converts mevalonate into 5-phosphomevalonate. 5-phosphomevalonate is then further converted to 5-diphosphomevalonate by the phosphomevalonate kinase erg8 (AFUA_5G10680). The diphosphomevalonate decarboxylase mvd1 (AFUA_4G07130) then produces isopentenyl diphosphate. The isopentenyl-diphosphate delta-isomerase idi1 (AFUA_6G11160) then catalyzes the 1,3-allylic rearrangement of the homoallylic substrate isopentenyl (IPP) to its highly electrophilic allylic isomer, dimethylallyl diphosphate (DMAPP). Finally the farnesyl diphosphate synthase erg20 (AFUA_5G02450) catalyzes the sequential condensation of isopentenyl pyrophosphate with dimethylallyl pyrophosphate, and then with the resultant geranylpyrophosphate to the ultimate product farnesyl pyrophosphate. This chain is Diphosphomevalonate decarboxylase mvd1, found in Aspergillus fumigatus (strain ATCC MYA-4609 / CBS 101355 / FGSC A1100 / Af293) (Neosartorya fumigata).